The sequence spans 220 residues: Small ribosomal subunit protein uS3 (220 aa).

The KH type-2 domain maps to 38–106 (IRKYVKGRLK…RVHININEIK (69 aa)).

It belongs to the universal ribosomal protein uS3 family. In terms of assembly, part of the 30S ribosomal subunit. Forms a tight complex with proteins S10 and S14.

Its function is as follows. Binds the lower part of the 30S subunit head. Binds mRNA in the 70S ribosome, positioning it for translation. This chain is Small ribosomal subunit protein uS3, found in Brevibacillus brevis (strain 47 / JCM 6285 / NBRC 100599).